The following is a 701-amino-acid chain: Elongation factor G (701 aa).

A tr-type G domain is found at 8 to 286; the sequence is ERIRNIGIIA…AIVHYLPSPV (279 aa). GTP contacts are provided by residues 17–24, 85–89, and 139–142; these read AHIDAGKT, DTPGH, and NKMD.

Belongs to the TRAFAC class translation factor GTPase superfamily. Classic translation factor GTPase family. EF-G/EF-2 subfamily.

It localises to the cytoplasm. Catalyzes the GTP-dependent ribosomal translocation step during translation elongation. During this step, the ribosome changes from the pre-translocational (PRE) to the post-translocational (POST) state as the newly formed A-site-bound peptidyl-tRNA and P-site-bound deacylated tRNA move to the P and E sites, respectively. Catalyzes the coordinated movement of the two tRNA molecules, the mRNA and conformational changes in the ribosome. This chain is Elongation factor G, found in Roseiflexus sp. (strain RS-1).